A 504-amino-acid chain; its full sequence is Probable cytochrome P450 6a21 (504 aa).

Residue Cys-449 coordinates heme.

Belongs to the cytochrome P450 family. Requires heme as cofactor.

The protein resides in the endoplasmic reticulum membrane. Its subcellular location is the microsome membrane. In terms of biological role, may be involved in the metabolism of insect hormones and in the breakdown of synthetic insecticides. The sequence is that of Probable cytochrome P450 6a21 (Cyp6a21) from Drosophila melanogaster (Fruit fly).